Consider the following 633-residue polypeptide: Probable extracellular metalloproteinase 3 (633 aa).

Positions 1–18 (MHGLLLAGLLALPMNVLA) are cleaved as a signal peptide. Positions 19 to 246 (HPAEQHASNV…VHNVVDYVAS (228 aa)) are excised as a propeptide. N-linked (GlcNAc...) asparagine glycosylation is present at Asn410. Residue His429 coordinates Zn(2+). Glu430 is a catalytic residue. His433 is a binding site for Zn(2+). 2 N-linked (GlcNAc...) asparagine glycosylation sites follow: Asn480 and Asn622.

Belongs to the peptidase M36 family. Zn(2+) is required as a cofactor.

The protein localises to the secreted. Secreted metalloproteinase probably acting as a virulence factor. In Trichophyton verrucosum (strain HKI 0517), this protein is Probable extracellular metalloproteinase 3 (MEP3).